We begin with the raw amino-acid sequence, 409 residues long: Phosphatidylserine decarboxylase proenzyme, mitochondrial (409 aa).

The transit peptide at 1 to 52 directs the protein to the mitochondrion; sequence MAASVCRPYVRSLPGVMPWRSSSCHYEYTAMHHFLGSFQKLPFEPFNTGARK. Residues 53-63 are Mitochondrial matrix-facing; that stretch reads IHTAPVRSLFL. A helical transmembrane segment spans residues 64 to 82; it reads LRPVPILLATGGGYAGYRQ. Residues 83–409 lie on the Mitochondrial intermembrane side of the membrane; it reads YEKYRDQKLE…IRFGEALGSL (327 aa). Active-site charge relay system; for autoendoproteolytic cleavage activity residues include Asp191, His267, and Ser378. Ser378 (schiff-base intermediate with substrate; via pyruvic acid; for decarboxylase activity) is an active-site residue. A Pyruvic acid (Ser); by autocatalysis modification is found at Ser378.

Belongs to the phosphatidylserine decarboxylase family. PSD-B subfamily. Eukaryotic type I sub-subfamily. As to quaternary structure, heterodimer of a large membrane-associated beta subunit and a small pyruvoyl-containing alpha subunit. Pyruvate is required as a cofactor. In terms of processing, is synthesized initially as an inactive proenzyme. Formation of the active enzyme involves a self-maturation process in which the active site pyruvoyl group is generated from an internal serine residue via an autocatalytic post-translational modification. Two non-identical subunits are generated from the proenzyme in this reaction, and the pyruvate is formed at the N-terminus of the alpha chain, which is derived from the carboxyl end of the proenzyme. The autoendoproteolytic cleavage occurs by a canonical serine protease mechanism, in which the side chain hydroxyl group of the serine supplies its oxygen atom to form the C-terminus of the beta chain, while the remainder of the serine residue undergoes an oxidative deamination to produce ammonia and the pyruvoyl prosthetic group on the alpha chain. During this reaction, the Ser that is part of the protease active site of the proenzyme becomes the pyruvoyl prosthetic group, which constitutes an essential element of the active site of the mature decarboxylase.

The protein localises to the mitochondrion inner membrane. Its subcellular location is the cytoplasm. The protein resides in the lipid droplet. The enzyme catalyses a 1,2-diacyl-sn-glycero-3-phospho-L-serine + H(+) = a 1,2-diacyl-sn-glycero-3-phosphoethanolamine + CO2. Its pathway is phospholipid metabolism; phosphatidylethanolamine biosynthesis. Catalyzes the formation of phosphatidylethanolamine (PtdEtn) from phosphatidylserine (PtdSer). Plays a central role in phospholipid metabolism and in the interorganelle trafficking of phosphatidylserine. May be involved in lipid droplet biogenesis at the endoplasmic reticulum membrane. The chain is Phosphatidylserine decarboxylase proenzyme, mitochondrial from Cricetulus griseus (Chinese hamster).